Here is a 460-residue protein sequence, read N- to C-terminus: ATP synthase subunit beta 1 (460 aa).

Position 149-156 (G149–T156) interacts with ATP.

It belongs to the ATPase alpha/beta chains family. F-type ATPases have 2 components, CF(1) - the catalytic core - and CF(0) - the membrane proton channel. CF(1) has five subunits: alpha(3), beta(3), gamma(1), delta(1), epsilon(1). CF(0) has three main subunits: a(1), b(2) and c(9-12). The alpha and beta chains form an alternating ring which encloses part of the gamma chain. CF(1) is attached to CF(0) by a central stalk formed by the gamma and epsilon chains, while a peripheral stalk is formed by the delta and b chains.

It is found in the cell inner membrane. The enzyme catalyses ATP + H2O + 4 H(+)(in) = ADP + phosphate + 5 H(+)(out). Produces ATP from ADP in the presence of a proton gradient across the membrane. The catalytic sites are hosted primarily by the beta subunits. This Nitrosomonas eutropha (strain DSM 101675 / C91 / Nm57) protein is ATP synthase subunit beta 1.